A 380-amino-acid polypeptide reads, in one-letter code: Cytochrome b (380 aa).

4 helical membrane passes run 33 to 53 (FGSLLGVCLMIQIMTGLFLAM), 77 to 98 (WLIRYLHANGASMFFICLFIHV), 113 to 133 (WNIGIILFLTTMATAFVGYVL), and 178 to 198 (FFAFHFILPFIITALVLVHLL). The heme b site is built by histidine 83 and histidine 97. The heme b site is built by histidine 182 and histidine 196. An a ubiquinone-binding site is contributed by histidine 201. 4 consecutive transmembrane segments (helical) span residues 226 to 246 (IKDLLGVLLLLMVLMILVLFF), 288 to 308 (LGGVLALILSILILAAFPFLN), 320 to 340 (ITQFLYWIFIANLLILTWIGG), and 347 to 367 (FTTIGQISSILYFTIIVVLMP).

The protein belongs to the cytochrome b family. The cytochrome bc1 complex contains 11 subunits: 3 respiratory subunits (MT-CYB, CYC1 and UQCRFS1), 2 core proteins (UQCRC1 and UQCRC2) and 6 low-molecular weight proteins (UQCRH/QCR6, UQCRB/QCR7, UQCRQ/QCR8, UQCR10/QCR9, UQCR11/QCR10 and a cleavage product of UQCRFS1). This cytochrome bc1 complex then forms a dimer. The cofactor is heme b.

It is found in the mitochondrion inner membrane. Functionally, component of the ubiquinol-cytochrome c reductase complex (complex III or cytochrome b-c1 complex) that is part of the mitochondrial respiratory chain. The b-c1 complex mediates electron transfer from ubiquinol to cytochrome c. Contributes to the generation of a proton gradient across the mitochondrial membrane that is then used for ATP synthesis. The polypeptide is Cytochrome b (MT-CYB) (Thomasomys ischyrus (Strong-tailed oldfield mouse)).